Reading from the N-terminus, the 418-residue chain is Odorant receptor 13a (418 aa).

Residues 1 to 38 lie on the Cytoplasmic side of the membrane; the sequence is MFYSYPYKALSFPIQCVWLKLNGSWPLTESSRPWRSQS. The chain crosses the membrane as a helical span at residues 39 to 59; that stretch reads LLATAYIVWAWYVIASVGITI. The Extracellular portion of the chain corresponds to 60–70; it reads SYQTAFLLNNL. An N-linked (GlcNAc...) asparagine glycan is attached at N69. The helical transmembrane segment at 71–91 threads the bilayer; it reads SDIIITTENCCTTFMGVLNFV. The Cytoplasmic segment spans residues 92 to 140; sequence RLIHLRLNQRKFRQLIENFSYEIWIPNSSKNNVAAECRRRMVTFSIMTS. A helical membrane pass occupies residues 141 to 161; that stretch reads LLACLIIMYCVLPLVEIFFGP. Residues 162–195 lie on the Extracellular side of the membrane; sequence AFDAQNKPFPYKMIFPYDAQSSWIRYVMTYIFTS. Residues 196–216 traverse the membrane as a helical segment; that stretch reads YAGICVVTTLFAEDTILGFFI. The Cytoplasmic segment spans residues 217 to 273; that stretch reads TYTCGQFHLLHQRIAGLFAGSNAELAESIQLERLKRIVEKHNNIISFAKRLEDFFNP. Residues 274–294 form a helical membrane-spanning segment; sequence ILLANLMISSVLICMVGFQIV. The Extracellular portion of the chain corresponds to 295 to 299; the sequence is TGKNM. Residues 300 to 320 form a helical membrane-spanning segment; sequence FIGDYVKFIIYISSALSQLYV. Residues 321 to 385 lie on the Cytoplasmic side of the membrane; the sequence is LCENGDALIK…PVRITAFKFS (65 aa). A helical membrane pass occupies residues 386–406; the sequence is TLSLQSFTAILSTSISYFTLL. Over 407–418 the chain is Extracellular; that stretch reads RSVYFDDEKKLD.

Belongs to the insect chemoreceptor superfamily. Heteromeric odorant receptor channel (TC 1.A.69) family. Or1a subfamily. In terms of assembly, interacts with Orco. Complexes exist early in the endomembrane system in olfactory sensory neurons (OSNs), coupling these complexes to the conserved ciliary trafficking pathway. In terms of tissue distribution, expressed in olfactory sensory neurons in the antenna.

Its subcellular location is the cell membrane. In terms of biological role, odorant receptor which mediates acceptance or avoidance behavior, depending on its substrates. The odorant receptor repertoire encodes a large collection of odor stimuli that vary widely in identity, intensity, and duration. May form a complex with Orco to form odorant-sensing units, providing sensitive and prolonged odorant signaling and calcium permeability. Involved in the behavioral responses to octanol, nonanol, and pentyl acetate. This chain is Odorant receptor 13a (Or13a), found in Drosophila melanogaster (Fruit fly).